The chain runs to 555 residues: Benzoyl-CoA-dihydrodiol lyase (555 aa).

This sequence belongs to the benzoyl-CoA oxygenase component C family. As to quaternary structure, homodimer.

It carries out the reaction 2,3-epoxy-2,3-dihydrobenzoyl-CoA + 2 H2O = (3Z)-6-oxohex-3-enoyl-CoA + formate + H(+). Its function is as follows. Catalyzes the ring opening of 2,3-epoxy-2,3-dihydroxybenzoyl-CoA to form 3,4-didehydroadipyl-CoA semialdehyde. The sequence is that of Benzoyl-CoA-dihydrodiol lyase (boxC) from Aromatoleum evansii (Azoarcus evansii).